A 635-amino-acid polypeptide reads, in one-letter code: Glutamine--fructose-6-phosphate aminotransferase [isomerizing] (635 aa).

The Nucleophile; for GATase activity role is filled by Cys2. In terms of domain architecture, Glutamine amidotransferase type-2 spans 2 to 218 (CGIVGMVAGR…EGDIADVHRD (217 aa)). SIS domains are found at residues 299-439 (FERL…AKKI) and 472-625 (CARH…IDQP). The active-site For Fru-6P isomerization activity is Lys630.

In terms of assembly, homodimer.

Its subcellular location is the cytoplasm. The enzyme catalyses D-fructose 6-phosphate + L-glutamine = D-glucosamine 6-phosphate + L-glutamate. In terms of biological role, catalyzes the first step in hexosamine metabolism, converting fructose-6P into glucosamine-6P using glutamine as a nitrogen source. The protein is Glutamine--fructose-6-phosphate aminotransferase [isomerizing] of Treponema pallidum (strain Nichols).